The chain runs to 673 residues: NADH-quinone oxidoreductase chain 3 (673 aa).

The 2Fe-2S ferredoxin-type domain maps to 5–90; that stretch reads RKIKIDDTII…PSEIRTNSPM (86 aa). Positions 37, 48, 51, and 66 each coordinate [2Fe-2S] cluster. One can recognise a 4Fe-4S His(Cys)3-ligated-type domain in the interval 90-129; it reads MVKKAREGVMEFLLINHPLDCPICDQGGECDLQDQAMAYG. [4Fe-4S] cluster-binding residues include His-106, Cys-110, Cys-113, Cys-119, Cys-158, Cys-161, Cys-164, and Cys-208. The 4Fe-4S Mo/W bis-MGD-type domain occupies 227 to 283; sequence LTKTESIDVMDALGSSIRIDTKGREVMRILPRNHDGVNEEWISDKTRFVWDGLRRQR.

It belongs to the complex I 75 kDa subunit family. In terms of assembly, NDH-1 is composed of at least 14 different subunits, Nqo1 to Nqo14. The complex has a L-shaped structure, with the hydrophobic arm (subunits Nqo7, Nqo8, Nqo10 to Nqo14) embedded in the inner membrane and the hydrophilic peripheral arm (subunits Nqo1 to Nqo6, Nqo9) protruding into the bacterial cytoplasm. The hydrophilic domain contains all the redox centers. [2Fe-2S] cluster is required as a cofactor. It depends on [4Fe-4S] cluster as a cofactor.

The protein resides in the cell inner membrane. The catalysed reaction is a quinone + NADH + 5 H(+)(in) = a quinol + NAD(+) + 4 H(+)(out). Functionally, NDH-1 shuttles electrons from NADH, via FMN and iron-sulfur (Fe-S) centers, to quinones in the respiratory chain. The immediate electron acceptor for the enzyme in this species is believed to be ubiquinone. Couples the redox reaction to proton translocation (for every two electrons transferred, four hydrogen ions are translocated across the cytoplasmic membrane), and thus conserves the redox energy in a proton gradient. The chain is NADH-quinone oxidoreductase chain 3 from Paracoccus denitrificans.